Here is a 671-residue protein sequence, read N- to C-terminus: MSDNDALRALTAQMAQEGIRRLLVLSGDVSWCRERALALREALAGDWLWVATDAPAAPHCTPQALQTLLGREFRHAVFDAQLGFDASAFAALSGTLRAGSWLVLLTPPYSAWESRPDADSLRWSDCPQPVATPHFIQHLKRVMARDEQTLHWQQSQPFSWPRFPARPHWQPATGEPQPEQAAILRHLLRMPPGVAAVTAARGRGKSALAGQLISRMSGTAIVTAPSKAATDVLAQFAGEKFRFLAPDALLAGTETADWLIVDEAAAIPAPLLHRLASRFSRILLTTTVQGYEGTGRGFLLKFCARFPHLRRFELRQPVRWAQGCPLEQWVGEALIFDDETFAHAPQGAIRFSAFTQALWHTGPAQPLAVYQLLSGAHYRTSPLDLRRMMDAPGQHFLGAFTAERVAGAAWLVEEGRLSAALSQAVWAGYRRPRGNLVAQSLAAHGGDPLAATLTGRRVSRIAVHPARQREGIGQQLIAEAYGGASRCDYLSVSFGYTAELWRFWQRCGFVLVRMGNHKEASSGCYTAMALLPISEAGARLAHREHQRLRRDAEILARWNGEAIPVIPLKASTLNDDDWDELAGFAFAHRPLLTSLGSLSRLLERCELALPALRGRLEEKCSDANLCIRLGLPGRKALLVAQRREVAHALTALDDERAQRLRERVLQWQFFH.

ATP contacts are provided by residues glutamine 180, 202–211 (GRGKSALAGQ), and arginine 319. An N-acetyltransferase domain is found at 349–531 (IRFSAFTQAL…SGCYTAMALL (183 aa)). Acetyl-CoA-binding positions include 461–463 (IAV), 468–474 (QREGIGQ), glutamate 499, and arginine 506.

The protein belongs to the RNA cytidine acetyltransferase family. TmcA subfamily.

It localises to the cytoplasm. It carries out the reaction cytidine(34) in elongator tRNA(Met) + acetyl-CoA + ATP + H2O = N(4)-acetylcytidine(34) in elongator tRNA(Met) + ADP + phosphate + CoA + H(+). In terms of biological role, catalyzes the formation of N(4)-acetylcytidine (ac(4)C) at the wobble position of tRNA(Met), by using acetyl-CoA as an acetyl donor and ATP (or GTP). This Citrobacter koseri (strain ATCC BAA-895 / CDC 4225-83 / SGSC4696) protein is tRNA(Met) cytidine acetyltransferase TmcA.